Reading from the N-terminus, the 210-residue chain is UMP-CMP kinase 3 (210 aa).

34-39 (GSGKGT) is a binding site for ATP. The segment at 54-83 (SAGDLLRAEIKSGSENGTMIENMIKEGKIV) is NMP. A ribonucleoside 5'-phosphate-binding positions include arginine 60, 81–83 (KIV), and 108–111 (GFPR). Residue asparagine 115 coordinates CMP. The LID stretch occupies residues 146 to 154 (GRNQGRVDD). Arginine 147 contributes to the ATP binding site. The a ribonucleoside 5'-phosphate site is built by arginine 151 and arginine 162. Lysine 190 is a binding site for ATP.

It belongs to the adenylate kinase family. UMP-CMP kinase subfamily. As to quaternary structure, monomer. It depends on Mg(2+) as a cofactor.

It localises to the cytoplasm. It is found in the nucleus. The catalysed reaction is UMP + ATP = UDP + ADP. It catalyses the reaction CMP + ATP = CDP + ADP. The enzyme catalyses dCMP + ATP = dCDP + ADP. In terms of biological role, catalyzes the phosphorylation of pyrimidine nucleoside monophosphates at the expense of ATP. Plays an important role in de novo pyrimidine nucleotide biosynthesis. Has preference for UMP and CMP as phosphate acceptors. In Oryza sativa subsp. japonica (Rice), this protein is UMP-CMP kinase 3 (URA6).